The sequence spans 701 residues: Interleukin-1 receptor accessory protein-like 1-A (701 aa).

The N-terminal stretch at 1–19 (MTALNPVLFLLCGVSVSLS) is a signal peptide. The Extracellular segment spans residues 20 to 361 (LKVVSKRGSV…IGKRVELMYT (342 aa)). In terms of domain architecture, Ig-like C2-type 1 spans 33-133 (TDWSVDYLKY…RNSTFCMKVS (101 aa)). A disulfide bridge connects residues Cys-54 and Cys-121. N-linked (GlcNAc...) asparagine glycans are attached at residues Asn-64, Asn-125, Asn-141, Asn-216, Asn-267, and Asn-334. Ig-like C2-type domains are found at residues 146 to 235 (CYNS…TYLS) and 245 to 353 (PRIL…VQIG). Cys-167 and Cys-219 are disulfide-bonded. Residues Cys-270 and Cys-337 are joined by a disulfide bond. The chain crosses the membrane as a helical span at residues 362–382 (VELAGGLGAILLLLALLLSVY). Residues 383–701 (KCYRIELLLC…RETSISSVIW (319 aa)) lie on the Cytoplasmic side of the membrane. The region spanning 407–563 (KEYDAYLSYS…RFWKQLRYTM (157 aa)) is the TIR domain. Glu-495 is a catalytic residue. Residues 568–701 (PQQTITNHAL…RETSISSVIW (134 aa)) are required for synaptic vesicle accumulation during synaptogenesis.

It belongs to the interleukin-1 receptor family.

Its subcellular location is the cell membrane. It localises to the cytoplasm. It carries out the reaction NAD(+) + H2O = ADP-D-ribose + nicotinamide + H(+). In terms of biological role, may regulate secretion and presynaptic differentiation through inhibition of the activity of N-type voltage-gated calcium channel. During presynaptic differentiation may regulate both synaptic vesicle accumulation in axon terminals and subsequent axon terminal remodeling. The protein is Interleukin-1 receptor accessory protein-like 1-A (il1rapl1a) of Danio rerio (Zebrafish).